A 437-amino-acid chain; its full sequence is MPIIRKVLARQILDSRGNPTVEVDVYTENSFGRAAVPSGASTGIHEAVELRDGDAGIYLGKGVLKAVDNVNTVINDALKGMLVTEQEEIDEALLALDGTPNKSKLGANALLGVSLACAKAGAEYTGLPLFRYIGGTMANTLPVPMMNVLNGGAHADNTVDFQEFMIMPIGFSSYSDALRCGAEIFHALKSLLKSKGLSTAVGDEGGFAPNLRSNEEAIELVIEAIGKAGYKAGSPTDKGGLGEAQVMIALDPASSEFYDSAKKRYVFKKSSKQELTSLEMAEYWEKWASDYPIISIEDGMAEDDWEGWKILTDKIGSRVQLVGDDLFVTNSKRLAEGIERRVGNSILIKVNQIGTLTETLQAIDLAKRNGYTAVISHRSGETEDSTIAQIAVATNAGQIKTGSMSRSDRMAKYNELLRIEEELCGQAKYPGASAFRV.

Glutamine 162 is a (2R)-2-phosphoglycerate binding site. Catalysis depends on glutamate 204, which acts as the Proton donor. Mg(2+)-binding residues include aspartate 251, glutamate 297, and aspartate 324. Residues lysine 349, arginine 378, serine 379, and lysine 400 each coordinate (2R)-2-phosphoglycerate. Lysine 349 acts as the Proton acceptor in catalysis.

It belongs to the enolase family. It depends on Mg(2+) as a cofactor.

The protein resides in the cytoplasm. It localises to the secreted. It is found in the cell surface. The catalysed reaction is (2R)-2-phosphoglycerate = phosphoenolpyruvate + H2O. It functions in the pathway carbohydrate degradation; glycolysis; pyruvate from D-glyceraldehyde 3-phosphate: step 4/5. Its function is as follows. Catalyzes the reversible conversion of 2-phosphoglycerate (2-PG) into phosphoenolpyruvate (PEP). It is essential for the degradation of carbohydrates via glycolysis. The chain is Enolase from Chlorobium limicola (strain DSM 245 / NBRC 103803 / 6330).